An 89-amino-acid polypeptide reads, in one-letter code: Small ribosomal subunit protein uS15 (89 aa).

The segment covering 1–16 (MSVADIKKQDIVKDNG) has biased composition (basic and acidic residues). The disordered stretch occupies residues 1 to 24 (MSVADIKKQDIVKDNGRSANDTGS).

This sequence belongs to the universal ribosomal protein uS15 family. Part of the 30S ribosomal subunit. Forms a bridge to the 50S subunit in the 70S ribosome, contacting the 23S rRNA.

Its function is as follows. One of the primary rRNA binding proteins, it binds directly to 16S rRNA where it helps nucleate assembly of the platform of the 30S subunit by binding and bridging several RNA helices of the 16S rRNA. Functionally, forms an intersubunit bridge (bridge B4) with the 23S rRNA of the 50S subunit in the ribosome. The protein is Small ribosomal subunit protein uS15 of Ralstonia pickettii (strain 12J).